The sequence spans 276 residues: Transmembrane protein 53 (276 aa).

Residues 170 to 190 (LLLLAAFALVVILFHFLLAPF) traverse the membrane as a helical segment.

This sequence belongs to the TMEM53 family. Expressed in liver (at protein level).

It is found in the nucleus outer membrane. In terms of biological role, negatively regulates bone morphogenetic protein (BMP) signaling in osteoblast lineage cells by blocking cytoplasm-nucleus translocation of phosphorylated SMAD1/5/9 proteins. This chain is Transmembrane protein 53 (Tmem53), found in Mus musculus (Mouse).